A 207-amino-acid chain; its full sequence is Mediator of RNA polymerase II transcription subunit 21 (207 aa).

The interval 37–121 is disordered; that stretch reads PHPDVPDAAP…PDSPRTFASR (85 aa). A compositionally biased stretch (low complexity) spans 65–80; sequence PVPAQSQASPPAQNPA. Positions 84–96 are enriched in gly residues; the sequence is AGAGTSVGEGGQT. Low complexity predominate over residues 97–108; the sequence is PGPAAGAGADPN. Positions 146-196 form a coiled coil; it reads IDSSEAEQEKRIRELEGELRRVEEERELKMRELKRLRRTLENVLRAVETGL.

It belongs to the Mediator complex subunit 21 family. As to quaternary structure, component of the Mediator complex.

The protein localises to the nucleus. Component of the Mediator complex, a coactivator involved in the regulated transcription of nearly all RNA polymerase II-dependent genes. Mediator functions as a bridge to convey information from gene-specific regulatory proteins to the basal RNA polymerase II transcription machinery. Mediator is recruited to promoters by direct interactions with regulatory proteins and serves as a scaffold for the assembly of a functional preinitiation complex with RNA polymerase II and the general transcription factors. The polypeptide is Mediator of RNA polymerase II transcription subunit 21 (srb7) (Neosartorya fischeri (strain ATCC 1020 / DSM 3700 / CBS 544.65 / FGSC A1164 / JCM 1740 / NRRL 181 / WB 181) (Aspergillus fischerianus)).